A 255-amino-acid chain; its full sequence is F-box/SPRY domain-containing protein 1 (255 aa).

The F-box domain maps to 3 to 51; the sequence is DPVAALCNYNVLEVIFSYLELEDLNHCSQVCKSWYHFLNDENSDVWRWH. Positions 61–253 constitute a B30.2/SPRY domain; the sequence is LKSDLLASVS…VSMVYLGTPL (193 aa).

It belongs to the FBXO45/Fsn family. As to quaternary structure, component of an E3 ubiquitin ligase complex composed of hiw and Fsn.

The protein localises to the synapse. The protein operates within protein modification; protein ubiquitination. Functionally, required in the presynaptic motoneuron to down-regulate the levels of wnd and restrain synaptic terminal growth at the neuromuscular junction (NMJ). This chain is F-box/SPRY domain-containing protein 1, found in Drosophila yakuba (Fruit fly).